Consider the following 166-residue polypeptide: uncharacterized protein (166 aa).

It to B.subtilis YpjQ.

This is an uncharacterized protein from Bacillus subtilis (strain 168).